The sequence spans 326 residues: Pantothenate kinase (326 aa).

104-111 (GSVAVGKS) lines the ATP pocket.

This sequence belongs to the prokaryotic pantothenate kinase family.

Its subcellular location is the cytoplasm. The catalysed reaction is (R)-pantothenate + ATP = (R)-4'-phosphopantothenate + ADP + H(+). It participates in cofactor biosynthesis; coenzyme A biosynthesis; CoA from (R)-pantothenate: step 1/5. The polypeptide is Pantothenate kinase (Parvibaculum lavamentivorans (strain DS-1 / DSM 13023 / NCIMB 13966)).